Consider the following 572-residue polypeptide: Sulfite reductase [NADPH] hemoprotein beta-component (572 aa).

[4Fe-4S] cluster is bound by residues Cys437, Cys443, Cys482, and Cys486. Siroheme is bound at residue Cys486.

It belongs to the nitrite and sulfite reductase 4Fe-4S domain family. Alpha(8)-beta(8). The alpha component is a flavoprotein, the beta component is a hemoprotein. The cofactor is siroheme. [4Fe-4S] cluster is required as a cofactor.

It catalyses the reaction hydrogen sulfide + 3 NADP(+) + 3 H2O = sulfite + 3 NADPH + 4 H(+). It participates in sulfur metabolism; hydrogen sulfide biosynthesis; hydrogen sulfide from sulfite (NADPH route): step 1/1. Component of the sulfite reductase complex that catalyzes the 6-electron reduction of sulfite to sulfide. This is one of several activities required for the biosynthesis of L-cysteine from sulfate. This chain is Sulfite reductase [NADPH] hemoprotein beta-component, found in Staphylococcus epidermidis (strain ATCC 12228 / FDA PCI 1200).